Consider the following 426-residue polypeptide: Lipid droplet localized protein (426 aa).

Residues 278 to 298 (FYGYLIGLWIMFLSIFVKYPF) form a helical membrane-spanning segment.

This sequence belongs to the saccharopine dehydrogenase family.

Its subcellular location is the membrane. It is found in the lipid droplet. This is Lipid droplet localized protein from Caenorhabditis elegans.